Here is a 606-residue protein sequence, read N- to C-terminus: Granule-bound starch synthase 1, chloroplastic/amyloplastic (606 aa).

The transit peptide at 1–76 directs the protein to the chloroplast; it reads MSALTTSQLA…GSRRFPSVVV (76 aa). Residues 29–67 form a disordered region; sequence RHGFQGLKPRSPAGGDASSLSVTTSARATPKQQRSVQRG. Positions 46–66 are enriched in polar residues; that stretch reads SSLSVTTSARATPKQQRSVQR. Residue lysine 97 coordinates ADP-alpha-D-glucose.

Belongs to the glycosyltransferase 1 family. Bacterial/plant glycogen synthase subfamily.

It localises to the plastid. The protein localises to the chloroplast. Its subcellular location is the amyloplast. The catalysed reaction is an NDP-alpha-D-glucose + [(1-&gt;4)-alpha-D-glucosyl](n) = [(1-&gt;4)-alpha-D-glucosyl](n+1) + a ribonucleoside 5'-diphosphate + H(+). It participates in glycan biosynthesis; starch biosynthesis. Functionally, required for the synthesis of amylose in endosperm. The sequence is that of Granule-bound starch synthase 1, chloroplastic/amyloplastic (WAXY) from Oryza sativa (Rice).